We begin with the raw amino-acid sequence, 156 residues long: Small ribosomal subunit protein uS7 (156 aa).

Belongs to the universal ribosomal protein uS7 family. In terms of assembly, part of the 30S ribosomal subunit. Contacts proteins S9 and S11.

Its function is as follows. One of the primary rRNA binding proteins, it binds directly to 16S rRNA where it nucleates assembly of the head domain of the 30S subunit. Is located at the subunit interface close to the decoding center, probably blocks exit of the E-site tRNA. The chain is Small ribosomal subunit protein uS7 from Deinococcus deserti (strain DSM 17065 / CIP 109153 / LMG 22923 / VCD115).